A 346-amino-acid polypeptide reads, in one-letter code: Biotin synthase (346 aa).

The Radical SAM core domain maps to 38–256 (QQVQVSTLLS…IAVARIMMPT (219 aa)). Residues Cys-53, Cys-57, and Cys-60 each contribute to the [4Fe-4S] cluster site. Residues Cys-97, Cys-128, Cys-188, and Arg-260 each contribute to the [2Fe-2S] cluster site.

This sequence belongs to the radical SAM superfamily. Biotin synthase family. In terms of assembly, homodimer. The cofactor is [4Fe-4S] cluster. Requires [2Fe-2S] cluster as cofactor.

It carries out the reaction (4R,5S)-dethiobiotin + (sulfur carrier)-SH + 2 reduced [2Fe-2S]-[ferredoxin] + 2 S-adenosyl-L-methionine = (sulfur carrier)-H + biotin + 2 5'-deoxyadenosine + 2 L-methionine + 2 oxidized [2Fe-2S]-[ferredoxin]. The protein operates within cofactor biosynthesis; biotin biosynthesis; biotin from 7,8-diaminononanoate: step 2/2. Functionally, catalyzes the conversion of dethiobiotin (DTB) to biotin by the insertion of a sulfur atom into dethiobiotin via a radical-based mechanism. This Salmonella dublin (strain CT_02021853) protein is Biotin synthase.